A 182-amino-acid polypeptide reads, in one-letter code: Large ribosomal subunit protein bL17 (182 aa).

Residues 126 to 182 (ERANRVAASKAKKAEAEAAEAKAEEAEEAPEVEADTATDKAAEAEAAEAADEAAEDK) form a disordered region. Residues 137 to 149 (KKAEAEAAEAKAE) show a composition bias toward basic and acidic residues. Acidic residues-rich tracts occupy residues 150-161 (EAEEAPEVEADT) and 170-182 (EAAEAADEAAEDK).

Belongs to the bacterial ribosomal protein bL17 family. Part of the 50S ribosomal subunit. Contacts protein L32.

The protein is Large ribosomal subunit protein bL17 of Corynebacterium jeikeium (strain K411).